We begin with the raw amino-acid sequence, 268 residues long: Glucosamine-6-phosphate deaminase (268 aa).

D67 acts as the Proton acceptor; for enolization step in catalysis. The active-site For ring-opening step is the N136. The Proton acceptor; for ring-opening step role is filled by H138. The For ring-opening step role is filled by E143.

The protein belongs to the glucosamine/galactosamine-6-phosphate isomerase family. NagB subfamily. As to quaternary structure, homohexamer.

The enzyme catalyses alpha-D-glucosamine 6-phosphate + H2O = beta-D-fructose 6-phosphate + NH4(+). The protein operates within amino-sugar metabolism; N-acetylneuraminate degradation; D-fructose 6-phosphate from N-acetylneuraminate: step 5/5. Its function is as follows. Catalyzes the reversible isomerization-deamination of glucosamine 6-phosphate (GlcN6P) to form fructose 6-phosphate (Fru6P) and ammonium ion. The sequence is that of Glucosamine-6-phosphate deaminase from Shewanella loihica (strain ATCC BAA-1088 / PV-4).